We begin with the raw amino-acid sequence, 374 residues long: uncharacterized protein (374 aa).

A disordered region spans residues 197–223 (GTTTTTNNNNNNNNNNNNNNNNGTNIT). A compositionally biased stretch (low complexity) spans 198-223 (TTTTTNNNNNNNNNNNNNNNNGTNIT). The stretch at 302 to 342 (DEVSDCNDINTNLKKKRKQQEQLQIEKEKKLLTIQQEQTKI) forms a coiled coil.

This is an uncharacterized protein from Dictyostelium discoideum (Social amoeba).